The following is a 144-amino-acid chain: Large ribosomal subunit protein uL11 (144 aa).

This sequence belongs to the universal ribosomal protein uL11 family. As to quaternary structure, part of the ribosomal stalk of the 50S ribosomal subunit. Interacts with L10 and the large rRNA to form the base of the stalk. L10 forms an elongated spine to which L12 dimers bind in a sequential fashion forming a multimeric L10(L12)X complex. In terms of processing, one or more lysine residues are methylated.

Its function is as follows. Forms part of the ribosomal stalk which helps the ribosome interact with GTP-bound translation factors. This chain is Large ribosomal subunit protein uL11, found in Saccharopolyspora erythraea (strain ATCC 11635 / DSM 40517 / JCM 4748 / NBRC 13426 / NCIMB 8594 / NRRL 2338).